Reading from the N-terminus, the 165-residue chain is Cathelicidin-7 (165 aa).

An N-terminal signal peptide occupies residues 1–29 (METQRASFSLGRSSLWLLLLGLVVPSASA). The propeptide occupies 30 to 130 (QDLSYREAVL…FDITCNNIQS (101 aa)). Intrachain disulfides connect C86–C97 and C108–C125. Position 164 is an arginine amide (R164).

It belongs to the cathelicidin family. As to expression, expressed in bone marrow myeloid cells, spleen and testis.

It is found in the secreted. Its function is as follows. Exerts a potent antimicrobial activity. The chain is Cathelicidin-7 (CATHL7) from Bos taurus (Bovine).